Consider the following 136-residue polypeptide: MARVTVEDCIEKVENRFELVLLASHRARLLAAGAPLTVERDRDKNPVVALREIGDETITAEDLKEQLIHSMQKYVEVDEPEAETVPLLSSSPAAAAVAPQSSSDDKNVQFDFMSEEDLLRGLENLAPPTETDDEGE.

Belongs to the RNA polymerase subunit omega family. The RNAP catalytic core consists of 2 alpha, 1 beta, 1 beta' and 1 omega subunit. When a sigma factor is associated with the core the holoenzyme is formed, which can initiate transcription.

The catalysed reaction is RNA(n) + a ribonucleoside 5'-triphosphate = RNA(n+1) + diphosphate. In terms of biological role, promotes RNA polymerase assembly. Latches the N- and C-terminal regions of the beta' subunit thereby facilitating its interaction with the beta and alpha subunits. The polypeptide is DNA-directed RNA polymerase subunit omega (Methylorubrum extorquens (strain CM4 / NCIMB 13688) (Methylobacterium extorquens)).